Consider the following 311-residue polypeptide: tRNA-cytidine(32) 2-sulfurtransferase (311 aa).

The short motif at 47-52 (SGGKDS) is the PP-loop motif element. The [4Fe-4S] cluster site is built by cysteine 122, cysteine 125, and cysteine 213.

This sequence belongs to the TtcA family. As to quaternary structure, homodimer. Requires Mg(2+) as cofactor. It depends on [4Fe-4S] cluster as a cofactor.

The protein resides in the cytoplasm. It carries out the reaction cytidine(32) in tRNA + S-sulfanyl-L-cysteinyl-[cysteine desulfurase] + AH2 + ATP = 2-thiocytidine(32) in tRNA + L-cysteinyl-[cysteine desulfurase] + A + AMP + diphosphate + H(+). The protein operates within tRNA modification. Its function is as follows. Catalyzes the ATP-dependent 2-thiolation of cytidine in position 32 of tRNA, to form 2-thiocytidine (s(2)C32). The sulfur atoms are provided by the cysteine/cysteine desulfurase (IscS) system. In Klebsiella pneumoniae subsp. pneumoniae (strain ATCC 700721 / MGH 78578), this protein is tRNA-cytidine(32) 2-sulfurtransferase.